We begin with the raw amino-acid sequence, 392 residues long: Probable adenylyltransferase/sulfurtransferase MoeZ (392 aa).

Residues 45 to 65 (VLVIGAGGLGAPTLLYLAAAG) traverse the membrane as a helical segment. Residues glycine 52, aspartate 73, 80 to 84 (SNLQR), lysine 97, and 141 to 142 (DN) each bind ATP. Cysteine 203 acts as the Glycyl thioester intermediate; for adenylyltransferase activity in catalysis. Residues 300 to 390 (SGRKLALIDV…WAKQMQPDMV (91 aa)) form the Rhodanese domain. The active-site Cysteine persulfide intermediate; for sulfurtransferase activity is the cysteine 350.

In the N-terminal section; belongs to the HesA/MoeB/ThiF family.

It localises to the membrane. Catalyzes the conversion of the sulfur carrier protein CysO to CysO-thiocarboxylate. The reaction is thought to proceed in two steps: first, ATP-dependent activation of CysO as acyl-adenylate (CysO-COOAMP), followed by sulfur transfer to give CysO-thiocarboxylate (CysO-COSH). The polypeptide is Probable adenylyltransferase/sulfurtransferase MoeZ (moeZ) (Mycobacterium tuberculosis (strain CDC 1551 / Oshkosh)).